Here is a 400-residue protein sequence, read N- to C-terminus: Large envelope protein (400 aa).

Met1 carries the post-translational modification N-acetylmethionine. Disordered regions lie at residues 1–53 (MGGW…DHWP), 88–118 (VPVA…SHPQ), and 145–169 (GSSS…SRTG). Gly2 carries the N-myristoyl glycine; by host lipid modification. The tract at residues 2-119 (GGWSSKPRQG…PPLRDSHPQA (118 aa)) is pre-S1. A pre-S region spans residues 2 to 174 (GGWSSKPRQG…SSRTGDPAPN (173 aa)). Residues 2–181 (GGWSSKPRQG…APNMENTTSG (180 aa)) lie on the Virion surface; in external conformation side of the membrane. Topologically, residues 2–253 (GGWSSKPRQG…PGYRWMCLRR (252 aa)) are intravirion; in internal conformation. Trp4 is a glycosylation site (N-linked (GlcNAc...) asparagine). Positions 96–106 (STNRQSGRQPT) are enriched in polar residues. Residues 120-174 (MQWNSTTFHQALLDPRVRGLYFPAGGSSSGTVNPVPTTASPISSISSRTGDPAPN) are pre-S2. Positions 155–166 (PTTASPISSISS) are enriched in low complexity. The helical transmembrane segment at 182 to 202 (FLGPLLVLQAGFFLLTRILTI) threads the bilayer. The Intravirion; in external conformation segment spans residues 203–253 (PQSLDSWWTSLNFLGGAPTCPGQNSQSPTSNHSPTSCPPICPGYRWMCLRR). The helical transmembrane segment at 254–274 (FIIFLFILLLCLIFLLVLLDY) threads the bilayer. Residues 275-348 (QGMLPVCPLL…GASVRFSWLS (74 aa)) are Virion surface-facing. An N-linked (GlcNAc...) asparagine; by host glycan is attached at Asn320. Residues 349–369 (LLVPFVQWFVGLSPTVWLSVI) traverse the membrane as a helical segment. At 370 to 375 (WMMWYW) the chain is on the intravirion side. A helical transmembrane segment spans residues 376-398 (GPSLYNILSPFLPLLPIFFCLWV). Residues 399–400 (YI) are Virion surface-facing.

Belongs to the orthohepadnavirus major surface antigen family. As to quaternary structure, in its internal form (Li-HBsAg), interacts with the capsid protein and with the isoform S. Interacts with host chaperone CANX. Associates with host chaperone CANX through its pre-S2 N glycan; this association may be essential for isoform M proper secretion. In terms of assembly, interacts with isoform L. Interacts with the antigens of satellite virus HDV (HDVAgs); this interaction is required for encapsidation of HDV genomic RNA. Post-translationally, isoform M is N-terminally acetylated by host at a ratio of 90%, and N-glycosylated by host at the pre-S2 region. Myristoylated.

The protein localises to the virion membrane. The large envelope protein exists in two topological conformations, one which is termed 'external' or Le-HBsAg and the other 'internal' or Li-HBsAg. In its external conformation the protein attaches the virus to cell receptors and thereby initiating infection. This interaction determines the species specificity and liver tropism. This attachment induces virion internalization predominantly through caveolin-mediated endocytosis. The large envelope protein also assures fusion between virion membrane and endosomal membrane. In its internal conformation the protein plays a role in virion morphogenesis and mediates the contact with the nucleocapsid like a matrix protein. Its function is as follows. The middle envelope protein plays an important role in the budding of the virion. It is involved in the induction of budding in a nucleocapsid independent way. In this process the majority of envelope proteins bud to form subviral lipoprotein particles of 22 nm of diameter that do not contain a nucleocapsid. In Hepatitis B virus genotype C subtype adr (strain Japan/adr4/1983) (HBV-C), this protein is Large envelope protein.